The primary structure comprises 220 residues: Thiopurine S-methyltransferase (220 aa).

S-adenosyl-L-methionine contacts are provided by Trp-10, Leu-45, Glu-66, and Arg-123.

The protein belongs to the class I-like SAM-binding methyltransferase superfamily. TPMT family.

The protein localises to the cytoplasm. It catalyses the reaction S-adenosyl-L-methionine + a thiopurine = S-adenosyl-L-homocysteine + a thiopurine S-methylether.. This Nitrosomonas eutropha (strain DSM 101675 / C91 / Nm57) protein is Thiopurine S-methyltransferase.